Consider the following 269-residue polypeptide: Pertussis toxin subunit 1 homolog (269 aa).

Positions 1–34 are cleaved as a signal peptide; that stretch reads MRCTRAIRQTARTGWLTWLAILAVTAPMTSPAWA.

It belongs to the bacterial exotoxin subunit A family.

In Bordetella parapertussis (strain 12822 / ATCC BAA-587 / NCTC 13253), this protein is Pertussis toxin subunit 1 homolog (ptxA).